We begin with the raw amino-acid sequence, 672 residues long: Amidase chyE (672 aa).

Residue C2 is the Nucleophile of the active site. The 218-residue stretch at 2-219 (CGISAFLCHP…PGHYLISRPN (218 aa)) folds into the Glutamine amidotransferase type-2 domain. One can recognise an Asparagine synthetase domain in the interval 250–639 (VRKRLLEAVK…TQEAVEKAFT (390 aa)).

This sequence belongs to the asparagine synthetase family.

The protein operates within pigment biosynthesis. Its function is as follows. Amidase; part of the gene cluster that mediates the biosynthesis of the yellow pigment chrysogine. the NRPS chyA mediates the condensation of anthranilic acid and alanine into the intermediate 2-(2-aminopropanamido)benzoic acid. The remainder of the pathway is highly branched yielding at least 13 chrysogine-related compounds. The malonyl transferase chyE converts 2-(2-aminopropanamido)benzoic acid and 2-(2-aminopropanamido)benzamidine into 2-(2-(2-carboxyacetamido)propanamido)benzoic acid and 3-((1-((2-carbamoylphenyl)amino)-1-oxopropan-2-yl)amino)-3-oxopropanoic acid, respectively. ChyD is an amidase, being responsible for the amidation of the carboxylic acid moiety of 2-(2-aminopropanamido)benzoic acid, 2-(2-(2-carboxyacetamido)propanamido)benzoic acid and 2-(2-((4-amino-1-carboxy-4-oxobutyl)amino)propanamido)benzoic acid. ChyC is involved in the same reactions as ChyD, but plays a more minor role in the amidation reactions compared to chyD. The oxidoreductases chyH and chyM are involved in oxidation reactions that form N-pyruvoylanthranilamide from 2-(2-aminopropanamido)benzamidine and (1-((2-carbamoylphenyl)amino)-1-oxopropan-2-yl)glutamine, respectively. N-pyruvoylanthranilamide is further converted via two further branches in the pathway, yielding chrysogine and additional chrysogine-related coumpounds. Chrysogine is likely formed by a spontaneous ring closure from N-pyruvoylanthranilamide. This chain is Amidase chyE, found in Penicillium rubens (strain ATCC 28089 / DSM 1075 / NRRL 1951 / Wisconsin 54-1255) (Penicillium chrysogenum).